The primary structure comprises 800 residues: Transducin beta-like protein 3 (800 aa).

A2 carries the post-translational modification N-acetylalanine. 13 WD repeats span residues 64 to 105, 107 to 146, 149 to 190, 193 to 232, 245 to 284, 290 to 329, 332 to 372, 374 to 413, 419 to 459, 477 to 516, 519 to 560, 562 to 602, and 604 to 642; these read EDQE…RLWK, IHTAPVASMAFDATSTLLATGGCDGAVRVWDIVQHYGTHH, GSPG…CLAV, AHYSAVTSLSFSEDGHTMLSSGRDKICIVWDLRSYETSRT, LPEEPALALGVKNSGLHFLTAGDQGILRVWEAASGQCVYT, GLRQELTHCTLARAAGLLLTVTADHNLLLYEARSLQLQKQ, GYSE…CQIL, GHTDIVLALDVFRKGWLFASCAKDQSIRIWRMNKAGQVAC, GHTH…PSKN, CHDKDINSLAVSPNDKLLATGSQDRTAKLWALPQCQLLGV, GHRR…KTFE, HDAS…RTLD, and HEDKVWGLHCSRLDDHAITGGSDSRIILWKDVTEAEQAE. Residue K407 forms a Glycyl lysine isopeptide (Lys-Gly) (interchain with G-Cter in SUMO2) linkage.

Part of the small subunit (SSU) processome, composed of more than 70 proteins and the RNA chaperone small nucleolar RNA (snoRNA) U3.

Its subcellular location is the nucleus. The protein localises to the nucleolus. In terms of biological role, part of the small subunit (SSU) processome, first precursor of the small eukaryotic ribosomal subunit. During the assembly of the SSU processome in the nucleolus, many ribosome biogenesis factors, an RNA chaperone and ribosomal proteins associate with the nascent pre-rRNA and work in concert to generate RNA folding, modifications, rearrangements and cleavage as well as targeted degradation of pre-ribosomal RNA by the RNA exosome. The protein is Transducin beta-like protein 3 (Tbl3) of Rattus norvegicus (Rat).